The following is a 281-amino-acid chain: Clc-like protein 5 (281 aa).

The next 4 membrane-spanning stretches (helical) occupy residues Leu-13–Pro-33, Val-104–Phe-124, Ile-137–Phe-157, and Tyr-184–Val-204.

The protein belongs to the Clc family.

It is found in the membrane. This chain is Clc-like protein 5 (clc-5), found in Caenorhabditis elegans.